A 400-amino-acid polypeptide reads, in one-letter code: tRNA-specific adenosine deaminase 1 (400 aa).

Residues 76–400 (SIATGVKALP…WIPTRTDDVK (325 aa)) form the A to I editase domain. Residue His101 coordinates Zn(2+). Glu103 (proton donor) is an active-site residue. Arg108 serves as a coordination point for 1D-myo-inositol hexakisphosphate. Residues Cys157 and Cys223 each coordinate Zn(2+). Lys226, Arg232, Lys369, and Arg375 together coordinate 1D-myo-inositol hexakisphosphate.

The protein belongs to the ADAT1 family. Requires 1D-myo-inositol hexakisphosphate as cofactor. Zn(2+) is required as a cofactor.

It catalyses the reaction adenosine(37) in tRNA(Ala) + H2O + H(+) = inosine(37) in tRNA(Ala) + NH4(+). In terms of biological role, deaminates adenosine-37 to inosine in tRNA-Ala. The chain is tRNA-specific adenosine deaminase 1 (TAD1) from Saccharomyces cerevisiae (strain ATCC 204508 / S288c) (Baker's yeast).